The chain runs to 194 residues: Glycerol-3-phosphate acyltransferase 2 (194 aa).

The next 5 helical transmembrane spans lie at 1–21 (MWLLALVVAYLIGSIPTAYVV), 64–84 (VLAVLLGQALGGPVLVILAAL), 112–132 (LAMAPLALFWAFLIWLAVVIF), 135–155 (YISLGSIVAAAVAPFLVIYFH), and 156–173 (RPWPYVLFTFVAAALVIY).

Belongs to the PlsY family. Probably interacts with PlsX.

The protein localises to the cell membrane. The catalysed reaction is an acyl phosphate + sn-glycerol 3-phosphate = a 1-acyl-sn-glycero-3-phosphate + phosphate. It functions in the pathway lipid metabolism; phospholipid metabolism. Catalyzes the transfer of an acyl group from acyl-phosphate (acyl-PO(4)) to glycerol-3-phosphate (G3P) to form lysophosphatidic acid (LPA). This enzyme utilizes acyl-phosphate as fatty acyl donor, but not acyl-CoA or acyl-ACP. This is Glycerol-3-phosphate acyltransferase 2 from Moorella thermoacetica (strain ATCC 39073 / JCM 9320).